Consider the following 116-residue polypeptide: Large ribosomal subunit protein bL19 (116 aa).

It belongs to the bacterial ribosomal protein bL19 family.

Functionally, this protein is located at the 30S-50S ribosomal subunit interface and may play a role in the structure and function of the aminoacyl-tRNA binding site. The protein is Large ribosomal subunit protein bL19 of Geobacillus sp. (strain WCH70).